A 703-amino-acid polypeptide reads, in one-letter code: UvrABC system protein B (703 aa).

One can recognise a Helicase ATP-binding domain in the interval 33-190 (TRIENGENDV…RRFVAMQYKR (158 aa)). 46–53 (GATGTGKT) serves as a coordination point for ATP. Positions 99 to 122 (YYDYYQPEAYIPQTDTYIEKDSNI) match the Beta-hairpin motif. One can recognise a Helicase C-terminal domain in the interval 436–589 (QIDDLLAEIK…QIAYNQEHGI (154 aa)). Residues 659–694 (ADLIRQLSEQMHTAAEQLQFELAARLRDEIRDLKKE) form the UVR domain.

Belongs to the UvrB family. Forms a heterotetramer with UvrA during the search for lesions. Interacts with UvrC in an incision complex.

It is found in the cytoplasm. Its function is as follows. The UvrABC repair system catalyzes the recognition and processing of DNA lesions. A damage recognition complex composed of 2 UvrA and 2 UvrB subunits scans DNA for abnormalities. Upon binding of the UvrA(2)B(2) complex to a putative damaged site, the DNA wraps around one UvrB monomer. DNA wrap is dependent on ATP binding by UvrB and probably causes local melting of the DNA helix, facilitating insertion of UvrB beta-hairpin between the DNA strands. Then UvrB probes one DNA strand for the presence of a lesion. If a lesion is found the UvrA subunits dissociate and the UvrB-DNA preincision complex is formed. This complex is subsequently bound by UvrC and the second UvrB is released. If no lesion is found, the DNA wraps around the other UvrB subunit that will check the other stand for damage. The sequence is that of UvrABC system protein B from Bifidobacterium longum subsp. infantis (strain ATCC 15697 / DSM 20088 / JCM 1222 / NCTC 11817 / S12).